Here is a 392-residue protein sequence, read N- to C-terminus: MRGSCERSGEDEEQKEEAMVACGRLSGVPEAEQGPEANWDSDLETEGTDGLGELVRDTLYLRSCRAHSVVPISCFLRQGSAQELNLRHRGLGPQGARALASSLSSNPYVKRLDLRDNGLCGAGAEALAGALSKSSSIHDVDLSENQLGVAGAQALCAALTVNQAMRKMQLSGNGLEEQAAQHLAELLLAHTDLKSLDLSYNQLNDQAGETLGPALAENTGLTELNVSWNHLRGPGAVAFARGLEANIFLKVLDISYNGFGDPGASAVGEALKANNVLEELNMSNNRISAMGALSLGLGLRVNQTLRILVVSRNPMRSEGCFGLLKSVQDNPASALELLDFSDIQVNAEFDGLASSVRGILPELCIKTGACRVEYKKELLPVFRSALPASVPK.

Residues 24-46 (RLSGVPEAEQGPEANWDSDLETE) are disordered. LRR repeat units follow at residues 106-129 (NPYV…ALAG), 134-157 (SSSI…ALCA), 162-185 (NQAM…HLAE), 192-213 (DLKS…TLGP), 220-241 (GLTE…AFAR), 248-269 (FLKV…AVGE), 276-297 (VLEE…SLGL), 304-325 (TLRI…GLLK), and 334-356 (ALEL…ASSV).

In Homo sapiens (Human), this protein is Leucine-rich repeat-containing protein 74B.